A 117-amino-acid polypeptide reads, in one-letter code: Hydrogenase maturation factor HypA (117 aa).

His2 lines the Ni(2+) pocket. 4 residues coordinate Zn(2+): Cys73, Cys76, Cys89, and Cys92.

The protein belongs to the HypA/HybF family.

Involved in the maturation of [NiFe] hydrogenases. Required for nickel insertion into the metal center of the hydrogenase. The protein is Hydrogenase maturation factor HypA of Shewanella baltica (strain OS195).